The chain runs to 347 residues: Bombesin receptor-activated protein C6orf89 homolog (347 aa).

Topologically, residues M1–L58 are cytoplasmic. The chain crosses the membrane as a helical span at residues I59–I79. Residues Q80 to L347 lie on the Extracellular side of the membrane.

Homodimer. Interacts with BRS3. Interacts (via N-terminus) with SIN3B. Glycosylated.

It localises to the golgi apparatus membrane. The protein localises to the cytoplasm. Exhibits histone deacetylase (HDAC) enhancer properties. May play a role in cell cycle progression and wound repair of bronchial epithelial cells. The sequence is that of Bombesin receptor-activated protein C6orf89 homolog from Pongo abelii (Sumatran orangutan).